The primary structure comprises 500 residues: Cytochrome P450 2D15 (500 aa).

Residue cysteine 446 coordinates heme.

This sequence belongs to the cytochrome P450 family. Heme is required as a cofactor. As to expression, liver. Also detected in several other tissues.

The protein resides in the endoplasmic reticulum membrane. The protein localises to the microsome membrane. It catalyses the reaction an organic molecule + reduced [NADPH--hemoprotein reductase] + O2 = an alcohol + oxidized [NADPH--hemoprotein reductase] + H2O + H(+). Functionally, high activity for the hydroxylation of bunitrolol and imipramine; low activity on debrisoquine. The protein is Cytochrome P450 2D15 (CYP2D15) of Canis lupus familiaris (Dog).